The following is a 407-amino-acid chain: Imidazolonepropionase (407 aa).

Residues His-68 and His-70 each coordinate Fe(3+). His-68 and His-70 together coordinate Zn(2+). Residues Arg-77, Tyr-140, and His-173 each coordinate 4-imidazolone-5-propanoate. Residue Tyr-140 coordinates N-formimidoyl-L-glutamate. His-238 provides a ligand contact to Fe(3+). His-238 provides a ligand contact to Zn(2+). Position 241 (Gln-241) interacts with 4-imidazolone-5-propanoate. Asp-313 lines the Fe(3+) pocket. Asp-313 is a binding site for Zn(2+). N-formimidoyl-L-glutamate is bound by residues Asn-315 and Gly-317. Thr-318 contributes to the 4-imidazolone-5-propanoate binding site.

Belongs to the metallo-dependent hydrolases superfamily. HutI family. Requires Zn(2+) as cofactor. Fe(3+) serves as cofactor.

Its subcellular location is the cytoplasm. The catalysed reaction is 4-imidazolone-5-propanoate + H2O = N-formimidoyl-L-glutamate. It functions in the pathway amino-acid degradation; L-histidine degradation into L-glutamate; N-formimidoyl-L-glutamate from L-histidine: step 3/3. Its function is as follows. Catalyzes the hydrolytic cleavage of the carbon-nitrogen bond in imidazolone-5-propanoate to yield N-formimidoyl-L-glutamate. It is the third step in the universal histidine degradation pathway. The sequence is that of Imidazolonepropionase from Burkholderia orbicola (strain MC0-3).